Reading from the N-terminus, the 252-residue chain is Acetoacetate decarboxylase (252 aa).

The Schiff-base intermediate with acetoacetate role is filled by Lys116.

It belongs to the ADC family.

It catalyses the reaction acetoacetate + H(+) = acetone + CO2. Functionally, catalyzes the conversion of acetoacetate to acetone and carbon dioxide. This chain is Acetoacetate decarboxylase, found in Paraburkholderia phytofirmans (strain DSM 17436 / LMG 22146 / PsJN) (Burkholderia phytofirmans).